We begin with the raw amino-acid sequence, 202 residues long: Dephospho-CoA kinase (202 aa).

One can recognise a DPCK domain in the interval Lys6 to Ile202. Ser14 to Glu19 contributes to the ATP binding site.

It belongs to the CoaE family.

It localises to the cytoplasm. The enzyme catalyses 3'-dephospho-CoA + ATP = ADP + CoA + H(+). Its pathway is cofactor biosynthesis; coenzyme A biosynthesis; CoA from (R)-pantothenate: step 5/5. Its function is as follows. Catalyzes the phosphorylation of the 3'-hydroxyl group of dephosphocoenzyme A to form coenzyme A. In Chlamydia trachomatis serovar A (strain ATCC VR-571B / DSM 19440 / HAR-13), this protein is Dephospho-CoA kinase.